The chain runs to 553 residues: uncharacterized protein (553 aa).

The next 2 membrane-spanning stretches (helical) occupy residues 6 to 26 and 524 to 544; these read IKIFLISLIFISGVYALQVDA and SYWILGIIVVIAIVLVVGYVF.

The protein to M.jannaschii MJ0795 and MJ1506.

Its subcellular location is the cell membrane. This is an uncharacterized protein from Methanocaldococcus jannaschii (strain ATCC 43067 / DSM 2661 / JAL-1 / JCM 10045 / NBRC 100440) (Methanococcus jannaschii).